We begin with the raw amino-acid sequence, 376 residues long: Phytanoyl-CoA hydroxylase-interacting protein-like (376 aa).

In terms of domain architecture, Fibronectin type-III spans 52–161 (VPHNIKISNI…EIIEFCTADY (110 aa)).

The protein belongs to the PHYHIP family.

May play a role in the development of the central system. In Xenopus laevis (African clawed frog), this protein is Phytanoyl-CoA hydroxylase-interacting protein-like (phyhipl).